Here is a 65-residue protein sequence, read N- to C-terminus: Putative potassium channel toxin Ts21 (65 aa).

The N-terminal stretch at Met-1 to Gly-25 is a signal peptide. 3 disulfides stabilise this stretch: Cys-31/Cys-53, Cys-38/Cys-61, and Cys-42/Cys-63.

The protein belongs to the short scorpion toxin superfamily. Potassium channel inhibitor family. Alpha-KTx 11 subfamily. As to expression, expressed by the venom gland.

The protein resides in the secreted. This recombinant toxin inhibits the mammalian voltage-gated potassium channels Kv1.3/KCNA3 in vitro with an IC(50) of 26.40 nM. This is Putative potassium channel toxin Ts21 from Tityus serrulatus (Brazilian scorpion).